A 524-amino-acid polypeptide reads, in one-letter code: Phosphoenolpyruvate carboxykinase (ATP) (524 aa).

Substrate is bound by residues arginine 52, tyrosine 188, and lysine 194. ATP is bound by residues lysine 194, histidine 213, and 229-237; that span reads GLSGTGKTT. Positions 194 and 213 each coordinate Mn(2+). A Mn(2+)-binding site is contributed by aspartate 250. Residues glutamate 278, arginine 314, and threonine 439 each coordinate ATP. Arginine 314 contacts substrate.

The protein belongs to the phosphoenolpyruvate carboxykinase (ATP) family. The cofactor is Mn(2+).

It is found in the cytoplasm. The enzyme catalyses oxaloacetate + ATP = phosphoenolpyruvate + ADP + CO2. The protein operates within carbohydrate biosynthesis; gluconeogenesis. Functionally, involved in the gluconeogenesis. Catalyzes the conversion of oxaloacetate (OAA) to phosphoenolpyruvate (PEP) through direct phosphoryl transfer between the nucleoside triphosphate and OAA. In Campylobacter jejuni (strain RM1221), this protein is Phosphoenolpyruvate carboxykinase (ATP).